Reading from the N-terminus, the 178-residue chain is MVDENTQDNAPEQEEEAAIVQAGPVSSWLTENGFDHDLLEPDHLGVELIKVSPDFLVPLCTALYAYGFNYLQCQGAYDLGPGKELVSFYHLIKVSDNCEQAEEVRIKVFLPRDNPHIPSVYWIWKAADWQERESYDMYGIIYDGHPDLKRILMPEDWVGWPLRKDYVSPDFYELQDAY.

The protein belongs to the complex I 30 kDa subunit family. NDH-1 can be composed of about 15 different subunits; different subcomplexes with different compositions have been identified which probably have different functions.

The protein resides in the cellular thylakoid membrane. The catalysed reaction is a plastoquinone + NADH + (n+1) H(+)(in) = a plastoquinol + NAD(+) + n H(+)(out). The enzyme catalyses a plastoquinone + NADPH + (n+1) H(+)(in) = a plastoquinol + NADP(+) + n H(+)(out). Its function is as follows. NDH-1 shuttles electrons from an unknown electron donor, via FMN and iron-sulfur (Fe-S) centers, to quinones in the respiratory and/or the photosynthetic chain. The immediate electron acceptor for the enzyme in this species is believed to be plastoquinone. Couples the redox reaction to proton translocation, and thus conserves the redox energy in a proton gradient. Cyanobacterial NDH-1 also plays a role in inorganic carbon-concentration. This is NAD(P)H-quinone oxidoreductase subunit J from Crocosphaera subtropica (strain ATCC 51142 / BH68) (Cyanothece sp. (strain ATCC 51142)).